Consider the following 249-residue polypeptide: Probable transcriptional regulatory protein Strop_1792 (249 aa).

Belongs to the TACO1 family.

The protein resides in the cytoplasm. The chain is Probable transcriptional regulatory protein Strop_1792 from Salinispora tropica (strain ATCC BAA-916 / DSM 44818 / JCM 13857 / NBRC 105044 / CNB-440).